Here is an 83-residue protein sequence, read N- to C-terminus: UPF0297 protein LEUM_0557 (83 aa).

The protein belongs to the UPF0297 family.

The polypeptide is UPF0297 protein LEUM_0557 (Leuconostoc mesenteroides subsp. mesenteroides (strain ATCC 8293 / DSM 20343 / BCRC 11652 / CCM 1803 / JCM 6124 / NCDO 523 / NBRC 100496 / NCIMB 8023 / NCTC 12954 / NRRL B-1118 / 37Y)).